We begin with the raw amino-acid sequence, 425 residues long: Enolase (425 aa).

Q162 is a (2R)-2-phosphoglycerate binding site. E204 serves as the catalytic Proton donor. Mg(2+)-binding residues include D241, E282, and D309. 4 residues coordinate (2R)-2-phosphoglycerate: K334, R363, S364, and K385. The Proton acceptor role is filled by K334.

It belongs to the enolase family. Requires Mg(2+) as cofactor.

The protein resides in the cytoplasm. Its subcellular location is the secreted. The protein localises to the cell surface. The enzyme catalyses (2R)-2-phosphoglycerate = phosphoenolpyruvate + H2O. The protein operates within carbohydrate degradation; glycolysis; pyruvate from D-glyceraldehyde 3-phosphate: step 4/5. Catalyzes the reversible conversion of 2-phosphoglycerate (2-PG) into phosphoenolpyruvate (PEP). It is essential for the degradation of carbohydrates via glycolysis. This Corynebacterium jeikeium (strain K411) protein is Enolase.